Consider the following 514-residue polypeptide: Putative ribose/galactose/methyl galactoside import ATP-binding protein 3 (514 aa).

ABC transporter domains follow at residues 21–256 (LRLD…VGRT) and 267–512 (VPTD…SGRS). 53–60 (GENGAGKS) provides a ligand contact to ATP.

Belongs to the ABC transporter superfamily. Carbohydrate importer 2 (CUT2) (TC 3.A.1.2) family.

It localises to the cell inner membrane. The catalysed reaction is D-ribose(out) + ATP + H2O = D-ribose(in) + ADP + phosphate + H(+). It catalyses the reaction D-galactose(out) + ATP + H2O = D-galactose(in) + ADP + phosphate + H(+). Functionally, part of an ABC transporter complex involved in carbohydrate import. Could be involved in ribose, galactose and/or methyl galactoside import. Responsible for energy coupling to the transport system. The chain is Putative ribose/galactose/methyl galactoside import ATP-binding protein 3 from Burkholderia cenocepacia (strain HI2424).